The following is a 312-amino-acid chain: Olfactory receptor OR51C1 (312 aa).

Topologically, residues M1–W26 are extracellular. A helical membrane pass occupies residues I27–F47. Residues A48–L66 are Cytoplasmic-facing. A helical transmembrane segment spans residues S67 to F87. Topologically, residues N88–S99 are extracellular. A disulfide bond links C97 and C179. A helical membrane pass occupies residues H100 to F120. The Cytoplasmic segment spans residues D121 to Q143. The helical transmembrane segment at I144–I164 threads the bilayer. The Extracellular segment spans residues R165–T201. A helical membrane pass occupies residues A202–I222. Over R223 to T240 the chain is Cytoplasmic. The chain crosses the membrane as a helical span at residues C241–V261. Topologically, residues H262–H273 are extracellular. Residues T274–V294 form a helical membrane-spanning segment. At K295–T312 the chain is on the cytoplasmic side.

Belongs to the G-protein coupled receptor 1 family.

It is found in the membrane. Its function is as follows. Odorant receptor. The protein is Olfactory receptor OR51C1 of Homo sapiens (Human).